Reading from the N-terminus, the 600-residue chain is Putative fucosyltransferase R654 (600 aa).

It belongs to the glycosyltransferase 10 family.

In Acanthamoeba polyphaga mimivirus (APMV), this protein is Putative fucosyltransferase R654.